Consider the following 138-residue polypeptide: Large ribosomal subunit protein bL17 (138 aa).

It belongs to the bacterial ribosomal protein bL17 family. In terms of assembly, part of the 50S ribosomal subunit. Contacts protein L32.

In Methylorubrum extorquens (strain PA1) (Methylobacterium extorquens), this protein is Large ribosomal subunit protein bL17.